We begin with the raw amino-acid sequence, 222 residues long: Beta-casein (222 aa).

A signal peptide spans Met-1–Ala-15. The residue at position 27 (Thr-27) is a Phosphothreonine. Phosphoserine occurs at positions 30, 32, 33, and 34.

The protein belongs to the beta-casein family. As to expression, mammary gland specific. Secreted in milk.

Its subcellular location is the secreted. In terms of biological role, important role in determination of the surface properties of the casein micelles. In Ovis aries (Sheep), this protein is Beta-casein (CSN2).